A 268-amino-acid polypeptide reads, in one-letter code: Urease accessory protein UreD (268 aa).

The protein belongs to the UreD family. UreD, UreF and UreG form a complex that acts as a GTP-hydrolysis-dependent molecular chaperone, activating the urease apoprotein by helping to assemble the nickel containing metallocenter of UreC. The UreE protein probably delivers the nickel.

The protein resides in the cytoplasm. Functionally, required for maturation of urease via the functional incorporation of the urease nickel metallocenter. The polypeptide is Urease accessory protein UreD (Lysinibacillus sphaericus (strain C3-41)).